Here is a 1534-residue protein sequence, read N- to C-terminus: DNA-directed RNA polymerase subunit beta'' (1534 aa).

Cys-220, Cys-296, Cys-303, and Cys-306 together coordinate Zn(2+). 2 stretches are compositionally biased toward basic and acidic residues: residues 644-668 and 678-688; these read RTQEEEYRTREEEYRTREEEYRTRE and PENKYRTREGE. Disordered stretches follow at residues 644–698 and 719–800; these read RTQE…EDEY and YRTL…KKEG. Composition is skewed to acidic residues over residues 744-762 and 770-789; these read GEYEILEEDSEEEYGSSED and TLEEDSEEDSEEDSEDEYGS.

It belongs to the RNA polymerase beta' chain family. RpoC2 subfamily. In terms of assembly, in plastids the minimal PEP RNA polymerase catalytic core is composed of four subunits: alpha, beta, beta', and beta''. When a (nuclear-encoded) sigma factor is associated with the core the holoenzyme is formed, which can initiate transcription. Zn(2+) is required as a cofactor.

It is found in the plastid. The protein resides in the chloroplast. It carries out the reaction RNA(n) + a ribonucleoside 5'-triphosphate = RNA(n+1) + diphosphate. Functionally, DNA-dependent RNA polymerase catalyzes the transcription of DNA into RNA using the four ribonucleoside triphosphates as substrates. The chain is DNA-directed RNA polymerase subunit beta'' from Saccharum officinarum (Sugarcane).